The sequence spans 202 residues: Imidazoleglycerol-phosphate dehydratase (202 aa).

This sequence belongs to the imidazoleglycerol-phosphate dehydratase family.

The protein resides in the cytoplasm. The catalysed reaction is D-erythro-1-(imidazol-4-yl)glycerol 3-phosphate = 3-(imidazol-4-yl)-2-oxopropyl phosphate + H2O. It participates in amino-acid biosynthesis; L-histidine biosynthesis; L-histidine from 5-phospho-alpha-D-ribose 1-diphosphate: step 6/9. The protein is Imidazoleglycerol-phosphate dehydratase of Synechococcus sp. (strain CC9605).